The following is a 365-amino-acid chain: F-box protein At1g48060 (365 aa).

The disordered stretch occupies residues 1–20; sequence MKPQEEEEKNENMARKRSKS. Residues 20 to 69 form the F-box domain; that stretch reads SSSSLSIPLDIATDIFLRLPAKSVVRFSCVAKHWSSITTAPYFTNSFETR.

The protein is F-box protein At1g48060 of Arabidopsis thaliana (Mouse-ear cress).